The sequence spans 276 residues: Pantothenate synthetase (276 aa).

26–33 contacts ATP; that stretch reads MGFLHAGH. The active-site Proton donor is H33. (R)-pantoate is bound at residue Q57. Q57 lines the beta-alanine pocket. 143 to 146 is an ATP binding site; it reads GQKD. Q149 is a binding site for (R)-pantoate. Residues I172 and 180–183 each bind ATP; that span reads MSSR.

It belongs to the pantothenate synthetase family. As to quaternary structure, homodimer.

Its subcellular location is the cytoplasm. It carries out the reaction (R)-pantoate + beta-alanine + ATP = (R)-pantothenate + AMP + diphosphate + H(+). It participates in cofactor biosynthesis; (R)-pantothenate biosynthesis; (R)-pantothenate from (R)-pantoate and beta-alanine: step 1/1. Functionally, catalyzes the condensation of pantoate with beta-alanine in an ATP-dependent reaction via a pantoyl-adenylate intermediate. The sequence is that of Pantothenate synthetase from Herpetosiphon aurantiacus (strain ATCC 23779 / DSM 785 / 114-95).